The following is a 2767-amino-acid chain: Serine/threonine-protein kinase ATM (2767 aa).

One can recognise an FAT domain in the interval 1713 to 2317; it reads NVVMASNHCQ…FYQLYPLVFA (605 aa). A PI3K/PI4K catalytic domain is found at 2419–2734; the sequence is WTNETTQCGG…KLDGREAGTM (316 aa). The segment at 2425 to 2431 is G-loop; that stretch reads QCGGLNA. The interval 2601-2609 is catalytic loop; sequence GLGDRHTQN. The tract at residues 2621 to 2645 is activation loop; it reads HIDFGIAFEQGKIQTTPETVPFRLT. Positions 2735 to 2767 constitute an FATC domain; sequence GDSNVEAQVERLINEATLPSNLCMLFPGWDPHL.

It belongs to the PI3/PI4-kinase family. ATM subfamily.

Its subcellular location is the nucleus. The protein localises to the chromosome. The protein resides in the telomere. It carries out the reaction L-seryl-[protein] + ATP = O-phospho-L-seryl-[protein] + ADP + H(+). The catalysed reaction is L-threonyl-[protein] + ATP = O-phospho-L-threonyl-[protein] + ADP + H(+). Serine/threonine-protein kinase which recognizes the substrate consensus sequence [ST]-Q. Required to suppress spontaneous apoptosis of proliferating cells during development, and for their proper differentiation. Required for female fertility. Protects telomeres from fusion, maybe by recruiting or maintaining chromatin-modifying complexes such as Su(var)205/HP1. May activate checkpoint signaling in response to DNA double-stranded breaks induced by low-dose ionizing radiation. May phosphorylate histone H2AV. The sequence is that of Serine/threonine-protein kinase ATM (tefu) from Drosophila melanogaster (Fruit fly).